The primary structure comprises 482 residues: Scarecrow-like protein 3 (482 aa).

Residues 45-479 (LKPEERGLYL…RPLYSVSAWR (435 aa)) form the GRAS domain. Residues 52–115 (LYLIHLLLTC…ILKSWPGLYK (64 aa)) are leucine repeat I (LRI). Positions 134-199 (RRLFFEMFPI…EGPPHLRITG (66 aa)) are VHIID. The short motif at 165-169 (VHVID) is the VHIID element. Positions 209-241 (QMAHRLIEEAEKLDIPFQFNPVVSRLDCLNVEQ) are leucine repeat II (LRII). Positions 250–401 (LAVSSVLQLH…KMLFGEEIKN (152 aa)) are PFYRE. Residues 302–324 (ENDMSNNNGYSPSGDSASSLPLP) form a disordered region. Polar residues predominate over residues 305–324 (MSNNNGYSPSGDSASSLPLP). Residues 404 to 479 (SCEGFERRER…RPLYSVSAWR (76 aa)) form an SAW region.

This sequence belongs to the GRAS family. Binds to zinc finger proteins MGP/IDD3, IDD4, IDD5, BIB/IDD9 and JKD/IDD10. In terms of tissue distribution, expressed in seedlings, root epidermis, leaves, flowers and siliques.

The protein localises to the nucleus. Functionally, probable transcription factor involved in plant development. The chain is Scarecrow-like protein 3 from Arabidopsis thaliana (Mouse-ear cress).